The sequence spans 742 residues: Pyriculol/pyriculariol biosynthesis cluster transcription factor 1 (742 aa).

A DNA-binding region (zn(2)-C6 fungal-type) is located at residues C23–C49. The tract at residues G85 to H116 is disordered. Over residues K105–H116 the composition is skewed to basic and acidic residues.

The protein localises to the nucleus. Its function is as follows. Transcriptional regulator; part of the gene cluster that mediates the biosynthesis of pyriculol and pyriculariol, two heptaketides that induce lesion formation upon application on rice leaves but are dispensable for pathogenicity. With TRF2, negatively regulates the expression of the gene cluster and the subsequent pyriculol and pyriculariol production. The protein is Pyriculol/pyriculariol biosynthesis cluster transcription factor 1 of Pyricularia oryzae (strain 70-15 / ATCC MYA-4617 / FGSC 8958) (Rice blast fungus).